Consider the following 255-residue polypeptide: Pimeloyl-[acyl-carrier protein] methyl ester esterase (255 aa).

The region spanning 16–242 (LVLLHGWGLN…AAHAPFISHP (227 aa)) is the AB hydrolase-1 domain. Substrate-binding positions include W22, 82-83 (SL), and 143-147 (FLALQ). The active-site Nucleophile is S82. Catalysis depends on residues D207 and H235. Residue H235 participates in substrate binding.

Belongs to the AB hydrolase superfamily. Carboxylesterase BioH family. Monomer.

The protein localises to the cytoplasm. The catalysed reaction is 6-carboxyhexanoyl-[ACP] methyl ester + H2O = 6-carboxyhexanoyl-[ACP] + methanol + H(+). It functions in the pathway cofactor biosynthesis; biotin biosynthesis. Functionally, the physiological role of BioH is to remove the methyl group introduced by BioC when the pimeloyl moiety is complete. It allows to synthesize pimeloyl-ACP via the fatty acid synthetic pathway through the hydrolysis of the ester bonds of pimeloyl-ACP esters. The sequence is that of Pimeloyl-[acyl-carrier protein] methyl ester esterase from Pectobacterium atrosepticum (strain SCRI 1043 / ATCC BAA-672) (Erwinia carotovora subsp. atroseptica).